The sequence spans 714 residues: Phosphate acetyltransferase (714 aa).

The segment at 391–714 (AFRYQLTELA…LTAIQSAQQQ (324 aa)) is phosphate acetyltransferase.

It in the N-terminal section; belongs to the CobB/CobQ family. In the C-terminal section; belongs to the phosphate acetyltransferase and butyryltransferase family. In terms of assembly, homohexamer.

It is found in the cytoplasm. It catalyses the reaction acetyl-CoA + phosphate = acetyl phosphate + CoA. It participates in metabolic intermediate biosynthesis; acetyl-CoA biosynthesis; acetyl-CoA from acetate: step 2/2. With respect to regulation, inhibited by NADH and ATP. Pyruvate and PEP act as activators of the acetyl phosphate forming reaction while inhibiting the formation of acetyl-CoA. Involved in acetate metabolism. Catalyzes the reversible interconversion of acetyl-CoA and acetyl phosphate. The direction of the overall reaction changes depending on growth conditions. On minimal medium acetyl-CoA is generated. In rich medium acetyl-CoA is converted to acetate and allowing the cell to dump the excess of acetylation potential in exchange for energy in the form of ATP. The main pathway for acetate production during exponential phase. The protein is Phosphate acetyltransferase (pta) of Escherichia coli (strain K12).